We begin with the raw amino-acid sequence, 220 residues long: Octanoyltransferase (220 aa).

The 182-residue stretch at 27–208 (PGTADEIWLC…QLARAHGHAV (182 aa)) folds into the BPL/LPL catalytic domain. Residues 66-73 (RGGQVTYH), 139-141 (ALG), and 152-154 (GLA) each bind substrate. Cysteine 170 (acyl-thioester intermediate) is an active-site residue.

It belongs to the LipB family.

It is found in the cytoplasm. The enzyme catalyses octanoyl-[ACP] + L-lysyl-[protein] = N(6)-octanoyl-L-lysyl-[protein] + holo-[ACP] + H(+). It functions in the pathway protein modification; protein lipoylation via endogenous pathway; protein N(6)-(lipoyl)lysine from octanoyl-[acyl-carrier-protein]: step 1/2. Functionally, catalyzes the transfer of endogenously produced octanoic acid from octanoyl-acyl-carrier-protein onto the lipoyl domains of lipoate-dependent enzymes. Lipoyl-ACP can also act as a substrate although octanoyl-ACP is likely to be the physiological substrate. This is Octanoyltransferase from Bordetella parapertussis (strain 12822 / ATCC BAA-587 / NCTC 13253).